The chain runs to 505 residues: Aspartyl/glutamyl-tRNA(Asn/Gln) amidotransferase subunit B (505 aa).

A disordered region spans residues 220–241 (NVSLRPRPAPGDPDAPFGTRSE).

It belongs to the GatB/GatE family. GatB subfamily. Heterotrimer of A, B and C subunits.

It catalyses the reaction L-glutamyl-tRNA(Gln) + L-glutamine + ATP + H2O = L-glutaminyl-tRNA(Gln) + L-glutamate + ADP + phosphate + H(+). It carries out the reaction L-aspartyl-tRNA(Asn) + L-glutamine + ATP + H2O = L-asparaginyl-tRNA(Asn) + L-glutamate + ADP + phosphate + 2 H(+). In terms of biological role, allows the formation of correctly charged Asn-tRNA(Asn) or Gln-tRNA(Gln) through the transamidation of misacylated Asp-tRNA(Asn) or Glu-tRNA(Gln) in organisms which lack either or both of asparaginyl-tRNA or glutaminyl-tRNA synthetases. The reaction takes place in the presence of glutamine and ATP through an activated phospho-Asp-tRNA(Asn) or phospho-Glu-tRNA(Gln). This Frankia casuarinae (strain DSM 45818 / CECT 9043 / HFP020203 / CcI3) protein is Aspartyl/glutamyl-tRNA(Asn/Gln) amidotransferase subunit B.